We begin with the raw amino-acid sequence, 338 residues long: Phenylalanine--tRNA ligase alpha subunit (338 aa).

Glu253 is a Mg(2+) binding site.

The protein belongs to the class-II aminoacyl-tRNA synthetase family. Phe-tRNA synthetase alpha subunit type 1 subfamily. Tetramer of two alpha and two beta subunits. Mg(2+) is required as a cofactor.

Its subcellular location is the cytoplasm. The catalysed reaction is tRNA(Phe) + L-phenylalanine + ATP = L-phenylalanyl-tRNA(Phe) + AMP + diphosphate + H(+). This is Phenylalanine--tRNA ligase alpha subunit from Geobacter metallireducens (strain ATCC 53774 / DSM 7210 / GS-15).